The following is a 160-amino-acid chain: MITAYIALGSNLNTPVEQLHAALKAISQLSNTHLVTTSSFYKSKPLGPQDQPDYVNAVAKIETELSPLKLLDELQRIENEQGRVRLRRWGERTLDLDILLYGNEIIQNERLTIPHYDMHNREFVIVPLFEIASDLVLPNSQIITELVKQFADHKMIKLNP.

Belongs to the HPPK family. In terms of assembly, monomer.

The enzyme catalyses 6-hydroxymethyl-7,8-dihydropterin + ATP = (7,8-dihydropterin-6-yl)methyl diphosphate + AMP + H(+). It participates in cofactor biosynthesis; tetrahydrofolate biosynthesis; 2-amino-4-hydroxy-6-hydroxymethyl-7,8-dihydropteridine diphosphate from 7,8-dihydroneopterin triphosphate: step 4/4. Functionally, catalyzes the transfer of pyrophosphate from adenosine triphosphate (ATP) to 6-hydroxymethyl-7,8-dihydropterin, an enzymatic step in folate biosynthesis pathway. This is 2-amino-4-hydroxy-6-hydroxymethyldihydropteridine pyrophosphokinase (folK) from Haemophilus influenzae (strain ATCC 51907 / DSM 11121 / KW20 / Rd).